The chain runs to 103 residues: NADH-quinone oxidoreductase subunit K 1 (103 aa).

3 consecutive transmembrane segments (helical) span residues 6-26 (LGHF…GIFL), 32-52 (IIIL…LVAF), and 67-87 (LVLT…VVFF).

This sequence belongs to the complex I subunit 4L family. In terms of assembly, NDH-1 is composed of 14 different subunits. Subunits NuoA, H, J, K, L, M, N constitute the membrane sector of the complex.

It localises to the cell inner membrane. It carries out the reaction a quinone + NADH + 5 H(+)(in) = a quinol + NAD(+) + 4 H(+)(out). Its function is as follows. NDH-1 shuttles electrons from NADH, via FMN and iron-sulfur (Fe-S) centers, to quinones in the respiratory chain. The immediate electron acceptor for the enzyme in this species is believed to be ubiquinone. Couples the redox reaction to proton translocation (for every two electrons transferred, four hydrogen ions are translocated across the cytoplasmic membrane), and thus conserves the redox energy in a proton gradient. The sequence is that of NADH-quinone oxidoreductase subunit K 1 from Rhodopseudomonas palustris (strain ATCC BAA-98 / CGA009).